A 1275-amino-acid chain; its full sequence is O-antigen biosynthesis protein RfbC (1275 aa).

In terms of biological role, involved in O-antigen biosynthesis. The chain is O-antigen biosynthesis protein RfbC (rfbC) from Myxococcus xanthus.